Consider the following 281-residue polypeptide: Pantothenate synthetase (281 aa).

30 to 37 is a binding site for ATP; that stretch reads MGYLHEGH. Histidine 37 acts as the Proton donor in catalysis. Glutamine 61 contacts (R)-pantoate. Glutamine 61 serves as a coordination point for beta-alanine. 147–150 serves as a coordination point for ATP; sequence GEKD. Glutamine 153 contacts (R)-pantoate. ATP contacts are provided by residues isoleucine 176 and 184–187; that span reads KSSR.

Belongs to the pantothenate synthetase family. Homodimer.

It is found in the cytoplasm. The catalysed reaction is (R)-pantoate + beta-alanine + ATP = (R)-pantothenate + AMP + diphosphate + H(+). It functions in the pathway cofactor biosynthesis; (R)-pantothenate biosynthesis; (R)-pantothenate from (R)-pantoate and beta-alanine: step 1/1. In terms of biological role, catalyzes the condensation of pantoate with beta-alanine in an ATP-dependent reaction via a pantoyl-adenylate intermediate. This Clostridium botulinum (strain ATCC 19397 / Type A) protein is Pantothenate synthetase.